The sequence spans 363 residues: Electron transfer flavoprotein subunit alpha, mitochondrial (363 aa).

The transit peptide at 1–24 directs the protein to the mitochondrion; the sequence is MTRTVLLRALTKNKFVASNAPRSI. 303-331 lines the FAD pocket; sequence LYMAFGVSGAIQHLAGIKDSKVIVAVNKD.

The protein belongs to the ETF alpha-subunit/FixB family. Heterodimer of an alpha and a beta subunit. The cofactor is FAD.

It localises to the mitochondrion matrix. Functionally, the electron transfer flavoprotein serves as a specific electron acceptor for several dehydrogenases, including five acyl-CoA dehydrogenases, glutaryl-CoA and sarcosine dehydrogenase. It transfers the electrons to the main mitochondrial respiratory chain via ETF-ubiquinone oxidoreductase (ETF dehydrogenase). Involved in leucine catabolism and in phytol degradation. This Arabidopsis thaliana (Mouse-ear cress) protein is Electron transfer flavoprotein subunit alpha, mitochondrial (ETFA).